Here is a 490-residue protein sequence, read N- to C-terminus: MSQSVSERTRIKSDRYESGVIPYAKMGYWDAAYSVKDTDILALFRITPQPGVDPVEAAAAVAGESSTATWTVVWTDLLTACERYRAKAYRVDPVPNATDVYFAFIAYECDLFEEASLSNLTASIIGNVFGFKAISALRLEDMRIPHSYLKTFQGPATGIIVERERLNKYGTPLLGATVKPKLGLSGKNYGRVVYEGLKGGLDFLKDDENINSQPFMRWRERFLNCLEGINRASAATGEVKGSYLNITAATMEEVYKRAEYAKAIGSVVVMIDLVMGYTAIQSIAYWARENDMLLHLHRAGNSTYARQKNHGINFRVICKWMRMSGVDHIHAGTVVGKLEGDPLMIKGFYDILRLTELEVNLPFGIFFEMDWASLRRCMPVASGGIHCGQMHQLIHYLGDDVVLQFGGGTIGHPDGIQAGATANRVALEAMVFSRNEGADYFNNQVGPQILRDAAKTCGPLQTALDLWKDISFNYTSTDTADFAETATANR.

Asn127 and Thr177 together coordinate substrate. Lys179 functions as the Proton acceptor in the catalytic mechanism. Lys181 provides a ligand contact to substrate. Positions 205, 207, and 208 each coordinate Mg(2+). Lys205 is subject to N6-carboxylysine. The active-site Proton acceptor is His297. 3 residues coordinate substrate: Arg298, His330, and Ser382.

This sequence belongs to the RuBisCO large chain family. Type I subfamily. As to quaternary structure, heterohexadecamer of 8 large chains and 8 small chains. Requires Mg(2+) as cofactor.

The protein localises to the plastid. The protein resides in the chloroplast. It carries out the reaction 2 (2R)-3-phosphoglycerate + 2 H(+) = D-ribulose 1,5-bisphosphate + CO2 + H2O. It catalyses the reaction D-ribulose 1,5-bisphosphate + O2 = 2-phosphoglycolate + (2R)-3-phosphoglycerate + 2 H(+). In terms of biological role, ruBisCO catalyzes two reactions: the carboxylation of D-ribulose 1,5-bisphosphate, the primary event in carbon dioxide fixation, as well as the oxidative fragmentation of the pentose substrate in the photorespiration process. Both reactions occur simultaneously and in competition at the same active site. This is Ribulose bisphosphate carboxylase large chain from Detonula confervacea (Marine diatom).